The primary structure comprises 296 residues: Homoserine kinase (296 aa).

84–94 is an ATP binding site; the sequence is PLARGLGSSSS.

The protein belongs to the GHMP kinase family. Homoserine kinase subfamily.

It localises to the cytoplasm. It carries out the reaction L-homoserine + ATP = O-phospho-L-homoserine + ADP + H(+). It participates in amino-acid biosynthesis; L-threonine biosynthesis; L-threonine from L-aspartate: step 4/5. Catalyzes the ATP-dependent phosphorylation of L-homoserine to L-homoserine phosphate. The polypeptide is Homoserine kinase (Lactococcus lactis subsp. lactis (strain IL1403) (Streptococcus lactis)).